The chain runs to 345 residues: Beta-2-glycoprotein 1 (345 aa).

Positions 1 to 19 (MISLGLILFSSVLCHVATA) are cleaved as a signal peptide. Sushi domains are found at residues 21–81 (RTCP…RCIP), 82–139 (RVCP…VCTR), 140–202 (VTCP…ECRE), and 203–262 (VKCP…SCKA). 11 disulfide bridges follow: C23–C66, C51–C79, C84–C124, C110–C137, C142–C188, C174–C200, C205–C248, C234–C260, C264–C315, C300–C325, and C307–C345. O-linked (GalNAc...) threonine glycosylation occurs at T33. N-linked (GlcNAc...) asparagine glycosylation is found at N117, N162, N183, and N193. N253 carries an N-linked (GlcNAc...) asparagine glycan. Positions 263 to 345 (SCKLSVKKAT…KTDASDVKPC (83 aa)) are sushi-like.

In terms of tissue distribution, expressed by the liver and secreted in plasma.

Its subcellular location is the secreted. In terms of biological role, binds to various kinds of negatively charged substances such as heparin, phospholipids, and dextran sulfate. May prevent activation of the intrinsic blood coagulation cascade by binding to phospholipids on the surface of damaged cells. This Canis lupus familiaris (Dog) protein is Beta-2-glycoprotein 1 (APOH).